The sequence spans 301 residues: Probable alpha-L-glutamate ligase (301 aa).

Residues 104–287 (LQLLSRKGIG…VAGMIYEFIE (184 aa)) form the ATP-grasp domain. Residues K141, 178-179 (EF), D187, and 211-213 (RSN) each bind ATP. Residues D248, E260, and N262 each contribute to the Mg(2+) site. Mn(2+) is bound by residues D248, E260, and N262.

The protein belongs to the RimK family. Mg(2+) serves as cofactor. Mn(2+) is required as a cofactor.

This chain is Probable alpha-L-glutamate ligase, found in Vibrio vulnificus (strain CMCP6).